Consider the following 329-residue polypeptide: Malate dehydrogenase (329 aa).

Position 12-18 (12-18 (GAAGQIG)) interacts with NAD(+). Substrate-binding residues include Arg-93 and Arg-99. NAD(+) is bound by residues Asn-106, Gln-113, and 130-132 (TGN). Asn-132 and Arg-163 together coordinate substrate. His-188 serves as the catalytic Proton acceptor.

It belongs to the LDH/MDH superfamily. MDH type 2 family.

It catalyses the reaction (S)-malate + NAD(+) = oxaloacetate + NADH + H(+). Catalyzes the reversible oxidation of malate to oxaloacetate. The polypeptide is Malate dehydrogenase (Mycolicibacterium paratuberculosis (strain ATCC BAA-968 / K-10) (Mycobacterium paratuberculosis)).